The primary structure comprises 535 residues: Peroxisomal membrane protein PEX29 (535 aa).

2 helical membrane-spanning segments follow: residues 139 to 159 and 176 to 196; these read LSVP…SKPL and ILLL…PAYM. N-linked (GlcNAc...) asparagine glycosylation occurs at Asn-239. Residues 247 to 267 form a helical membrane-spanning segment; the sequence is MLLYVMSYDFVTSLIVKYLYF. N-linked (GlcNAc...) asparagine glycosylation occurs at Asn-271. Helical transmembrane passes span 272–292 and 297–317; these read ITIF…LFGA and AMLP…TIAM. Residues Asn-450 and Asn-515 are each glycosylated (N-linked (GlcNAc...) asparagine). Residues 511 to 535 form a disordered region; sequence AHRRNKSMESSNSLHPVKSIDSVDG.

The protein belongs to the PEX28-32 family. PEX29 subfamily.

It localises to the endoplasmic reticulum membrane. Its function is as follows. With PEX23, contributes to the formation of endoplasmic reticulum-mitochondria junctions which are important for mitochondrial function. Involved in lipid dropplets formation. This Ogataea parapolymorpha (strain ATCC 26012 / BCRC 20466 / JCM 22074 / NRRL Y-7560 / DL-1) (Yeast) protein is Peroxisomal membrane protein PEX29.